The chain runs to 536 residues: Pre-mRNA-splicing factor SLU7 (536 aa).

Residues 22-42 (EARKAGLAPAEVDEDGKEINP) are disordered. Residues 94 to 111 (GACENCGAMTHDKKSCME) form a CCHC-type zinc finger. A disordered region spans residues 178-201 (KLEEKDGEEGDENVASEEEDEEDG). The segment covering 182–200 (KDGEEGDENVASEEEDEED) has biased composition (acidic residues).

This sequence belongs to the SLU7 family.

The protein localises to the nucleus. Its function is as follows. Participates in the second catalytic step of pre-mRNA splicing, when the free hydroxyl group of exon I attacks the 3'-splice site to generate spliced mRNA and the excised lariat intron. The chain is Pre-mRNA-splicing factor SLU7 from Oryza sativa subsp. indica (Rice).